A 78-amino-acid polypeptide reads, in one-letter code: Large ribosomal subunit protein bL28 (78 aa).

This sequence belongs to the bacterial ribosomal protein bL28 family.

In Methylobacillus flagellatus (strain ATCC 51484 / DSM 6875 / VKM B-1610 / KT), this protein is Large ribosomal subunit protein bL28.